The sequence spans 211 residues: Pyridoxine/pyridoxamine 5'-phosphate oxidase (211 aa).

Substrate-binding positions include 7 to 10 (RTDY) and Lys65. FMN is bound by residues 60 to 65 (RILLIK), 75 to 76 (FT), Arg81, and Lys82. Residues Tyr122, Arg126, and Ser130 each contribute to the substrate site. FMN-binding positions include 139–140 (QS) and Trp183. 189–191 (RLH) lines the substrate pocket. Arg193 lines the FMN pocket.

The protein belongs to the pyridoxamine 5'-phosphate oxidase family. In terms of assembly, homodimer. It depends on FMN as a cofactor.

The catalysed reaction is pyridoxamine 5'-phosphate + O2 + H2O = pyridoxal 5'-phosphate + H2O2 + NH4(+). The enzyme catalyses pyridoxine 5'-phosphate + O2 = pyridoxal 5'-phosphate + H2O2. Its pathway is cofactor metabolism; pyridoxal 5'-phosphate salvage; pyridoxal 5'-phosphate from pyridoxamine 5'-phosphate: step 1/1. It participates in cofactor metabolism; pyridoxal 5'-phosphate salvage; pyridoxal 5'-phosphate from pyridoxine 5'-phosphate: step 1/1. Catalyzes the oxidation of either pyridoxine 5'-phosphate (PNP) or pyridoxamine 5'-phosphate (PMP) into pyridoxal 5'-phosphate (PLP). This is Pyridoxine/pyridoxamine 5'-phosphate oxidase from Janthinobacterium sp. (strain Marseille) (Minibacterium massiliensis).